The following is an 869-amino-acid chain: DNA mismatch repair protein MutS (869 aa).

624–631 contacts ATP; that stretch reads GPNMGGKS.

The protein belongs to the DNA mismatch repair MutS family.

In terms of biological role, this protein is involved in the repair of mismatches in DNA. It is possible that it carries out the mismatch recognition step. This protein has a weak ATPase activity. This Solibacter usitatus (strain Ellin6076) protein is DNA mismatch repair protein MutS.